The sequence spans 390 residues: Pyruvate dehydrogenase E1 component subunit alpha, somatic form, mitochondrial (390 aa).

A mitochondrion-targeting transit peptide spans 1-29; sequence MRKMLAAVSRVLSGVAQKPASRVLVASRH. An N6-acetyllysine; alternate modification is found at Lys63. The residue at position 63 (Lys63) is an N6-succinyllysine; alternate. Residues His92, Tyr118, Arg119, Ala157, Gly165, Val167, Asp196, Gly197, Ala198, Asn225, and Tyr227 each contribute to the pyruvate site. Residues Tyr118 and Arg119 each coordinate thiamine diphosphate. The thiamine diphosphate site is built by Gly165, Val167, Asp196, Gly197, Ala198, and Asn225. Asp196 contacts Mg(2+). Mg(2+) is bound by residues Asn225 and Tyr227. Phosphoserine; by PDK1 is present on Ser232. Residue Lys244 is modified to N6-acetyllysine; alternate. Position 244 is an N6-succinyllysine; alternate (Lys244). The residue at position 267 (Lys267) is an N6-acetyllysine. Lys277 bears the N6-succinyllysine mark. His292 lines the thiamine diphosphate pocket. A Phosphoserine; by PDK1, PDK2, PDK3 and PDK4 modification is found at Ser293. Ser295 is subject to Phosphoserine. Ser300 carries the phosphoserine; by PDK1, PDK2, PDK3 and PDK4 modification. At Tyr301 the chain carries Phosphotyrosine. At Lys313 the chain carries N6-acetyllysine; alternate. An N6-succinyllysine; alternate modification is found at Lys313. 2 positions are modified to N6-acetyllysine: Lys321 and Lys336. Lys385 is modified (N6-succinyllysine).

As to quaternary structure, heterotetramer of two PDHA1 and two PDHB subunits. The heterotetramer interacts with DLAT, and is part of the multimeric pyruvate dehydrogenase complex that contains multiple copies of pyruvate dehydrogenase (E1), dihydrolipoamide acetyltransferase (DLAT, E2) and lipoamide dehydrogenase (DLD, E3). These subunits are bound to an inner core composed of about 48 DLAT and 12 PDHX molecules. Thiamine diphosphate serves as cofactor. The cofactor is Mg(2+). In terms of processing, phosphorylation at Ser-232, Ser-293 and Ser-300 by PDK family kinases inactivates the enzyme; for this phosphorylation at a single site is sufficient. Phosphorylation at Ser-293 interferes with access to active site, and thereby inactivates the enzyme. Dephosphorylation at all three sites, i.e. at Ser-232, Ser-293 and Ser-300, is required for reactivation. Acetylation alters the phosphorylation pattern. Deacetylated by SIRT3.

The protein localises to the mitochondrion matrix. It carries out the reaction N(6)-[(R)-lipoyl]-L-lysyl-[protein] + pyruvate + H(+) = N(6)-[(R)-S(8)-acetyldihydrolipoyl]-L-lysyl-[protein] + CO2. Pyruvate dehydrogenase activity is inhibited by phosphorylation of PDHA1; it is reactivated by dephosphorylation. In terms of biological role, the pyruvate dehydrogenase complex catalyzes the overall conversion of pyruvate to acetyl-CoA and CO(2), and thereby links the glycolytic pathway to the tricarboxylic cycle. The sequence is that of Pyruvate dehydrogenase E1 component subunit alpha, somatic form, mitochondrial (PDHA1) from Bos taurus (Bovine).